Here is a 218-residue protein sequence, read N- to C-terminus: Probable transaldolase (218 aa).

The active-site Schiff-base intermediate with substrate is the Lys83.

This sequence belongs to the transaldolase family. Type 3B subfamily.

The protein resides in the cytoplasm. The catalysed reaction is D-sedoheptulose 7-phosphate + D-glyceraldehyde 3-phosphate = D-erythrose 4-phosphate + beta-D-fructose 6-phosphate. The protein operates within carbohydrate degradation; pentose phosphate pathway; D-glyceraldehyde 3-phosphate and beta-D-fructose 6-phosphate from D-ribose 5-phosphate and D-xylulose 5-phosphate (non-oxidative stage): step 2/3. In terms of biological role, transaldolase is important for the balance of metabolites in the pentose-phosphate pathway. In Parvibaculum lavamentivorans (strain DS-1 / DSM 13023 / NCIMB 13966), this protein is Probable transaldolase.